Consider the following 238-residue polypeptide: 1-(5-phosphoribosyl)-5-[(5-phosphoribosylamino)methylideneamino] imidazole-4-carboxamide isomerase (238 aa).

D8 acts as the Proton acceptor in catalysis. Catalysis depends on D129, which acts as the Proton donor.

It belongs to the HisA/HisF family.

The protein localises to the cytoplasm. It carries out the reaction 1-(5-phospho-beta-D-ribosyl)-5-[(5-phospho-beta-D-ribosylamino)methylideneamino]imidazole-4-carboxamide = 5-[(5-phospho-1-deoxy-D-ribulos-1-ylimino)methylamino]-1-(5-phospho-beta-D-ribosyl)imidazole-4-carboxamide. It participates in amino-acid biosynthesis; L-histidine biosynthesis; L-histidine from 5-phospho-alpha-D-ribose 1-diphosphate: step 4/9. The protein is 1-(5-phosphoribosyl)-5-[(5-phosphoribosylamino)methylideneamino] imidazole-4-carboxamide isomerase of Clostridium kluyveri (strain NBRC 12016).